We begin with the raw amino-acid sequence, 309 residues long: Glutaminase (309 aa).

Residues S64, N114, E160, N167, Y191, Y243, and V261 each coordinate substrate.

It belongs to the glutaminase family. Homotetramer.

It catalyses the reaction L-glutamine + H2O = L-glutamate + NH4(+). This Methylorubrum populi (strain ATCC BAA-705 / NCIMB 13946 / BJ001) (Methylobacterium populi) protein is Glutaminase.